Reading from the N-terminus, the 86-residue chain is Cytochrome c oxidase subunit 3 (86 aa).

Topologically, residues 1–15 (MAHQAHSYHMVDPSP) are mitochondrial matrix. The chain crosses the membrane as a helical span at residues 16-34 (WPIFGAAAALLTTSGLVMW). Residues 35-40 (FHYNSS) are Mitochondrial intermembrane-facing. The chain crosses the membrane as a helical span at residues 41–66 (ILLAAGLLSMLLVMLQWWREIVREST). Residues 67–86 (FQGHHTPTVQKGLRYGMILF) are Mitochondrial matrix-facing.

Belongs to the cytochrome c oxidase subunit 3 family. In terms of assembly, component of the cytochrome c oxidase (complex IV, CIV), a multisubunit enzyme composed of 14 subunits. The complex is composed of a catalytic core of 3 subunits MT-CO1, MT-CO2 and MT-CO3, encoded in the mitochondrial DNA, and 11 supernumerary subunits COX4I, COX5A, COX5B, COX6A, COX6B, COX6C, COX7A, COX7B, COX7C, COX8 and NDUFA4, which are encoded in the nuclear genome. The complex exists as a monomer or a dimer and forms supercomplexes (SCs) in the inner mitochondrial membrane with NADH-ubiquinone oxidoreductase (complex I, CI) and ubiquinol-cytochrome c oxidoreductase (cytochrome b-c1 complex, complex III, CIII), resulting in different assemblies (supercomplex SCI(1)III(2)IV(1) and megacomplex MCI(2)III(2)IV(2)).

It localises to the mitochondrion inner membrane. The enzyme catalyses 4 Fe(II)-[cytochrome c] + O2 + 8 H(+)(in) = 4 Fe(III)-[cytochrome c] + 2 H2O + 4 H(+)(out). Its function is as follows. Component of the cytochrome c oxidase, the last enzyme in the mitochondrial electron transport chain which drives oxidative phosphorylation. The respiratory chain contains 3 multisubunit complexes succinate dehydrogenase (complex II, CII), ubiquinol-cytochrome c oxidoreductase (cytochrome b-c1 complex, complex III, CIII) and cytochrome c oxidase (complex IV, CIV), that cooperate to transfer electrons derived from NADH and succinate to molecular oxygen, creating an electrochemical gradient over the inner membrane that drives transmembrane transport and the ATP synthase. Cytochrome c oxidase is the component of the respiratory chain that catalyzes the reduction of oxygen to water. Electrons originating from reduced cytochrome c in the intermembrane space (IMS) are transferred via the dinuclear copper A center (CU(A)) of subunit 2 and heme A of subunit 1 to the active site in subunit 1, a binuclear center (BNC) formed by heme A3 and copper B (CU(B)). The BNC reduces molecular oxygen to 2 water molecules using 4 electrons from cytochrome c in the IMS and 4 protons from the mitochondrial matrix. The sequence is that of Cytochrome c oxidase subunit 3 (MT-CO3) from Anas platyrhynchos (Mallard).